A 177-amino-acid polypeptide reads, in one-letter code: FMRFamide-like neuropeptides 7 (177 aa).

Residues 1 to 19 (MLGSRFLLLALGLLVLVLA) form the signal peptide. Positions 20–49 (EESAEQQVQEPTELEKSGEQLSEEDLIDEQ) are excised as a propeptide. Residues 25 to 106 (QQVQEPTELE…RSSMVRFGKR (82 aa)) form a disordered region. 6 positions are modified to phenylalanine amide: Phe-62, Phe-75, Phe-89, Phe-103, Phe-117, and Phe-130. Position 143 is a leucine amide (Leu-143). Phenylalanine amide is present on Phe-157. The propeptide occupies 161–177 (SMEFEMQSNEKNIEDSE).

Belongs to the FARP (FMRFamide related peptide) family. As to expression, expressed in the ASI sensory neurons, the ALA interneuron and the AVG interneuron from where secretion occurs. Expression in the ASI neurons is necessary and sufficient to maintain serotonin-induced fat loss.

It is found in the secreted. In terms of biological role, FMRFamide-like neuropeptides. Stimulates serotonin-induced fat loss by binding to and activating the npr-22 receptor which leads to induction of the atgl-1 lipase and subsequent fat loss. Together with atfs-1, negatively regulates the expression of the transcription regulator hlh-11, to promote expression of atgl-1, and thus atgl-1-dependent fat oxidation in response to mitochondrial stress. Its function is as follows. TPMQRSSMVRF-amide: Acts as a ligand for the npr-22 receptor in vitro. Functionally, SPMQRSSMVRF-amide: Acts as a ligand for the npr-22 receptor in vitro. Acts as a ligand for the npr-22 receptor in vitro. This Caenorhabditis elegans protein is FMRFamide-like neuropeptides 7.